The following is a 119-amino-acid chain: Flagellar transcriptional regulator FlhD (119 aa).

It belongs to the FlhD family. Homodimer; disulfide-linked. Forms a heterohexamer composed of two FlhC and four FlhD subunits. Each FlhC binds a FlhD dimer, forming a heterotrimer, and a hexamer assembles by dimerization of two heterotrimers.

Its subcellular location is the cytoplasm. Its function is as follows. Functions in complex with FlhC as a master transcriptional regulator that regulates transcription of several flagellar and non-flagellar operons by binding to their promoter region. Activates expression of class 2 flagellar genes, including fliA, which is a flagellum-specific sigma factor that turns on the class 3 genes. Also regulates genes whose products function in a variety of physiological pathways. The polypeptide is Flagellar transcriptional regulator FlhD (Escherichia fergusonii (strain ATCC 35469 / DSM 13698 / CCUG 18766 / IAM 14443 / JCM 21226 / LMG 7866 / NBRC 102419 / NCTC 12128 / CDC 0568-73)).